Here is a 552-residue protein sequence, read N- to C-terminus: Urocanate hydratase (552 aa).

NAD(+)-binding positions include 49–50 (GG), glutamine 127, 173–175 (GMG), glutamate 193, arginine 198, 239–240 (NA), 260–264 (QTSAH), 270–271 (YV), and tyrosine 319. Cysteine 407 is a catalytic residue. An NAD(+)-binding site is contributed by glycine 489.

This sequence belongs to the urocanase family. In terms of assembly, composed of at least two subunits. Requires NAD(+) as cofactor.

The protein resides in the cytoplasm. It catalyses the reaction 4-imidazolone-5-propanoate = trans-urocanate + H2O. The protein operates within amino-acid degradation; L-histidine degradation into L-glutamate; N-formimidoyl-L-glutamate from L-histidine: step 2/3. Its function is as follows. Catalyzes the conversion of urocanate to 4-imidazolone-5-propionate. The chain is Urocanate hydratase from Bacillus subtilis (strain 168).